Here is a 66-residue protein sequence, read N- to C-terminus: Ornithorhynchus venom defensin-like peptide A (66 aa).

The signal sequence occupies residues 1–22 (MRLTYLLLLLVAVLFQAGSGSA). Residues 23–24 (EP) constitute a propeptide that is removed on maturation. 3 cysteine pairs are disulfide-bonded: cysteine 33/cysteine 63, cysteine 40/cysteine 56, and cysteine 48/cysteine 64.

As to expression, produced by the crural gland and detected in venom from the spur located on each male hind leg. Is the only OvDLP that is expressed in venom gland alone.

The protein localises to the secreted. In terms of biological role, does not show antimicrobial, myotoxic, hemolytic and cell-promoting activities. The sequence is that of Ornithorhynchus venom defensin-like peptide A from Ornithorhynchus anatinus (Duckbill platypus).